The sequence spans 1771 residues: Kinase D-interacting substrate of 220 kDa (1771 aa).

Residues 1–499 (MSVLISQSVI…QIEPLFQFSW (499 aa)) are Cytoplasmic-facing. ANK repeat units lie at residues 4-33 (LISQSVINYVEEENIPALKALLEKCKDVDE), 37-66 (CGQTPLMIAAEQGNLEIVKELIKNGANCNL), 70-99 (DNWTALISASKEGHVHIVEELLKCGVNLEH), 103-132 (GGWTALMWACYKGRTDVVELLLSHGANPSV), 136-165 (YSVYPIIWAAGRGHADIVHLLLQNGAKVNC), 169-198 (YGTTPLVWAARKGHLECVKHLLAMGADVDQ), 202-231 (NSMTALIVAVKGGYTQSVKEILKRNPNVNL), 235-264 (DGNTALMIASKEGHTEIVQDLLDAGTYVNI), 268-297 (SGDTVLIGAVRGGHVEIVRALLQKYADIDI), 301-330 (DNKTALYWAVEKGNATMVRDILQCNPDTEI), 334-363 (DGETPLIKATKMRNIEVVELLLDKGAKVSA), and 367-396 (KGDTPLHIAIRGRSRKLAELLLRNPKDGRL). The 514-residue stretch at 440-953 (YDLYSSALAD…NIVSVTGRLL (514 aa)) folds into the KAP NTPase domain. A helical transmembrane segment spans residues 500–520 (LIVFLTLLLCGGLGLLFAFTV). Over 521 to 524 (HPNL) the chain is Extracellular. The helical transmembrane segment at 525-545 (GIAVSLSFLALLYIFFIVIYF) threads the bilayer. Topologically, residues 546-659 (GGRREGESWN…KWKKTCCLPS (114 aa)) are cytoplasmic. The helical transmembrane segment at 660–680 (FVIFLFIIGCIISGITLLAIF) threads the bilayer. Residues 681–685 (RVDPK) lie on the Extracellular side of the membrane. The chain crosses the membrane as a helical span at residues 686 to 706 (HLTVNAVLISIASVVGLAFVL). At 707–1771 (NCRTWWQVLD…GFGEERESIL (1065 aa)) the chain is on the cytoplasmic side. Phosphoserine is present on residues serine 882 and serine 885. A Phosphothreonine modification is found at threonine 914. Serine 918 carries the phosphoserine modification. The tract at residues 1089 to 1092 (PRAP) is mediates interaction with CRKL. The residue at position 1163 (serine 1163) is a Phosphoserine. Disordered stretches follow at residues 1182–1202 (DAAEGLSSPTDSSRGSGPAPG), 1285–1310 (PEDPRFLSESSSGPAPHGEPARRASH), 1344–1368 (RHSNLSWQSQTRRTPSLSSLNSQDS), and 1397–1564 (LEGG…EPIR). Serine 1296, serine 1352, serine 1359, serine 1361, serine 1362, and serine 1365 each carry phosphoserine. The span at 1346 to 1358 (SNLSWQSQTRRTP) shows a compositional bias: polar residues. Over residues 1359-1368 (SLSSLNSQDS) the composition is skewed to low complexity. Positions 1403 to 1430 (STTISGRSSPHSTYYMGQSSSGGSIHSN) are enriched in polar residues. Basic and acidic residues predominate over residues 1431–1457 (LEQEKGKDSEPKPDDGRKSFLMKRGDV). Polar residues predominate over residues 1460-1470 (YSSSGVSTNDA). 4 positions are modified to phosphoserine: serine 1521, serine 1526, serine 1555, and serine 1574. A compositionally biased stretch (acidic residues) spans 1522-1532 (DEDESGTEESD). Over residues 1537-1561 (LKDDKDRKAEGKVERVPKSPEHSAE) the composition is skewed to basic and acidic residues. A disordered region spans residues 1578 to 1633 (LDKKDSSDSGVRSSESSPNHSLHNEVADDSQLEKANLIELEDDSHSGKRGIPHSLS). Positions 1585-1594 (DSGVRSSESS) are enriched in low complexity. Phosphoserine occurs at positions 1623 and 1633. Threonine 1679 bears the Phosphothreonine mark. Serine 1681 bears the Phosphoserine mark. Threonine 1684 is subject to Phosphothreonine. The span at 1713–1731 (LRPSSSPNPTTIQNENLKS) shows a compositional bias: polar residues. Positions 1713 to 1771 (LRPSSSPNPTTIQNENLKSMTHKRSQRSSYTRLSKDPPELHAAASSESTGFGEERESIL) are disordered. The PDZ-binding signature appears at 1766–1771 (ERESIL).

Found in a complex, at least composed of KIDINS220, MAGI2, NTRK1 and RAPGEF2; the complex is mainly formed at late endosomes in a nerve growth factor (NGF)-dependent manner. Interacts with RAPGEF2; the interaction is strengthened after NGF stimulation. Isoform 2 interacts (via C-terminal domain) with MAGI2 isoform 1 (via PDZ domain). Interacts with NTRK1, NTRK2, NTRK3, ERKL and NGFR. Can form a ternary complex with NGFR and NTRK1 and this complex is affected by the expression levels of KIDINS220/ARMS. An increase in KIDINS220/ARMS expression leads to a decreased association of NGFR and NTRK1. Interacts (via PDZ-binding motif) with SNTA1 and SNTB2 (via PDZ domains). Interacts with EPHA4 and PRKD1. In terms of processing, tyrosine phosphorylated by NTRK1, NTRK2, EPHB2 and EPHA4. Phosphorylation at Ser-918 is induced by phorbol ester treatment. Phosphorylation by NTRK2 is induced by brain-derived neurotrophic factor (BDNF) and neurotrophin-4/5. Phosphorylation by NTRK1 is induced by nerve growth factor (NGF). In terms of tissue distribution, abundant in developing and adult neural tissues as well as neuroendocrine cells and dendritic cells. Overexpressed in melanoma and melanoma cell lines.

It is found in the membrane. The protein resides in the late endosome. In terms of biological role, promotes a prolonged MAP-kinase signaling by neurotrophins through activation of a Rap1-dependent mechanism. Provides a docking site for the CRKL-C3G complex, resulting in Rap1-dependent sustained ERK activation. May play an important role in regulating postsynaptic signal transduction through the syntrophin-mediated localization of receptor tyrosine kinases such as EPHA4. In cooperation with SNTA1 can enhance EPHA4-induced JAK/STAT activation. Plays a role in nerve growth factor (NGF)-induced recruitment of RAPGEF2 to late endosomes and neurite outgrowth. May play a role in neurotrophin- and ephrin-mediated neuronal outgrowth and in axon guidance during neural development and in neuronal regeneration. Modulates stress-induced apoptosis of melanoma cells via regulation of the MEK/ERK signaling pathway. The polypeptide is Kinase D-interacting substrate of 220 kDa (KIDINS220) (Homo sapiens (Human)).